Here is a 558-residue protein sequence, read N- to C-terminus: CTP synthase (558 aa).

The segment at 1–266 (MSAKYIFVTG…DRLVMKYLRL (266 aa)) is amidoligase domain. Residue Ser-14 coordinates CTP. Ser-14 provides a ligand contact to UTP. ATP-binding positions include 15–20 (SLGKGL) and Asp-72. The Mg(2+) site is built by Asp-72 and Glu-140. Residues 147-149 (DIE), 187-192 (KTKPTQ), and Lys-223 each bind CTP. Residues 187 to 192 (KTKPTQ) and Lys-223 contribute to the UTP site. 239–241 (KDV) provides a ligand contact to ATP. The 247-residue stretch at 291 to 537 (IIGIIGKYVE…IGASYEHRMK (247 aa)) folds into the Glutamine amidotransferase type-1 domain. Residue Gly-355 coordinates L-glutamine. Residue Cys-382 is the Nucleophile; for glutamine hydrolysis of the active site. Residues 383 to 386 (LGMQ), Glu-406, and Arg-463 contribute to the L-glutamine site. Active-site residues include His-510 and Glu-512. The segment at 539–558 (THTKEREEESVFLRPERVGK) is disordered. The span at 542–558 (KEREEESVFLRPERVGK) shows a compositional bias: basic and acidic residues.

The protein belongs to the CTP synthase family. In terms of assembly, homotetramer.

The catalysed reaction is UTP + L-glutamine + ATP + H2O = CTP + L-glutamate + ADP + phosphate + 2 H(+). The enzyme catalyses L-glutamine + H2O = L-glutamate + NH4(+). It carries out the reaction UTP + NH4(+) + ATP = CTP + ADP + phosphate + 2 H(+). The protein operates within pyrimidine metabolism; CTP biosynthesis via de novo pathway; CTP from UDP: step 2/2. Its activity is regulated as follows. Allosterically activated by GTP, when glutamine is the substrate; GTP has no effect on the reaction when ammonia is the substrate. The allosteric effector GTP functions by stabilizing the protein conformation that binds the tetrahedral intermediate(s) formed during glutamine hydrolysis. Inhibited by the product CTP, via allosteric rather than competitive inhibition. Its function is as follows. Catalyzes the ATP-dependent amination of UTP to CTP with either L-glutamine or ammonia as the source of nitrogen. Regulates intracellular CTP levels through interactions with the four ribonucleotide triphosphates. This chain is CTP synthase, found in Koribacter versatilis (strain Ellin345).